A 336-amino-acid polypeptide reads, in one-letter code: Holliday junction branch migration complex subunit RuvB (336 aa).

The large ATPase domain (RuvB-L) stretch occupies residues 1–182 (MKERIVNLET…FGMSFRMQFY (182 aa)). Residues L21, R22, G63, K66, T67, S68, 129–131 (EDF), R172, Y182, and R219 each bind ATP. Mg(2+) is bound at residue T67. The tract at residues 183-253 (NPSELALIIK…ITLHALNELG (71 aa)) is small ATPAse domain (RuvB-S). The tract at residues 256 to 336 (ELGFDEADLA…IPTLNPQTLF (81 aa)) is head domain (RuvB-H). DNA is bound by residues R310 and R315.

The protein belongs to the RuvB family. As to quaternary structure, homohexamer. Forms an RuvA(8)-RuvB(12)-Holliday junction (HJ) complex. HJ DNA is sandwiched between 2 RuvA tetramers; dsDNA enters through RuvA and exits via RuvB. An RuvB hexamer assembles on each DNA strand where it exits the tetramer. Each RuvB hexamer is contacted by two RuvA subunits (via domain III) on 2 adjacent RuvB subunits; this complex drives branch migration. In the full resolvosome a probable DNA-RuvA(4)-RuvB(12)-RuvC(2) complex forms which resolves the HJ.

It is found in the cytoplasm. The enzyme catalyses ATP + H2O = ADP + phosphate + H(+). In terms of biological role, the RuvA-RuvB-RuvC complex processes Holliday junction (HJ) DNA during genetic recombination and DNA repair, while the RuvA-RuvB complex plays an important role in the rescue of blocked DNA replication forks via replication fork reversal (RFR). RuvA specifically binds to HJ cruciform DNA, conferring on it an open structure. The RuvB hexamer acts as an ATP-dependent pump, pulling dsDNA into and through the RuvAB complex. RuvB forms 2 homohexamers on either side of HJ DNA bound by 1 or 2 RuvA tetramers; 4 subunits per hexamer contact DNA at a time. Coordinated motions by a converter formed by DNA-disengaged RuvB subunits stimulates ATP hydrolysis and nucleotide exchange. Immobilization of the converter enables RuvB to convert the ATP-contained energy into a lever motion, pulling 2 nucleotides of DNA out of the RuvA tetramer per ATP hydrolyzed, thus driving DNA branch migration. The RuvB motors rotate together with the DNA substrate, which together with the progressing nucleotide cycle form the mechanistic basis for DNA recombination by continuous HJ branch migration. Branch migration allows RuvC to scan DNA until it finds its consensus sequence, where it cleaves and resolves cruciform DNA. The chain is Holliday junction branch migration complex subunit RuvB from Helicobacter pylori (strain ATCC 700392 / 26695) (Campylobacter pylori).